The following is a 149-amino-acid chain: Nucleoside diphosphate kinase 1 (149 aa).

ATP contacts are provided by Lys9, Phe57, Arg85, Thr91, Arg102, and Asn112. His115 functions as the Pros-phosphohistidine intermediate in the catalytic mechanism.

This sequence belongs to the NDK family. The cofactor is Mg(2+). Autophosphorylated.

The enzyme catalyses a 2'-deoxyribonucleoside 5'-diphosphate + ATP = a 2'-deoxyribonucleoside 5'-triphosphate + ADP. It catalyses the reaction a ribonucleoside 5'-diphosphate + ATP = a ribonucleoside 5'-triphosphate + ADP. Major role in the synthesis of nucleoside triphosphates other than ATP. The ATP gamma phosphate is transferred to the NDP beta phosphate via a ping-pong mechanism, using a phosphorylated active-site intermediate. Also exhibits a kinase-like activity towards histone H1. The sequence is that of Nucleoside diphosphate kinase 1 (NDPK1) from Saccharum officinarum (Sugarcane).